A 383-amino-acid chain; its full sequence is Dual-specificity RNA methyltransferase RlmN (383 aa).

E94 (proton acceptor) is an active-site residue. Residues 100 to 339 form the Radical SAM core domain; sequence DGDRATLCVS…VTVRRTRGDD (240 aa). Residues C107 and C344 are joined by a disulfide bond. Residues C114, C118, and C121 each contribute to the [4Fe-4S] cluster site. Residues 168–169, S200, 222–224, and N301 each bind S-adenosyl-L-methionine; these read GE and SLH. C344 functions as the S-methylcysteine intermediate in the catalytic mechanism.

This sequence belongs to the radical SAM superfamily. RlmN family. The cofactor is [4Fe-4S] cluster.

It is found in the cytoplasm. It carries out the reaction adenosine(2503) in 23S rRNA + 2 reduced [2Fe-2S]-[ferredoxin] + 2 S-adenosyl-L-methionine = 2-methyladenosine(2503) in 23S rRNA + 5'-deoxyadenosine + L-methionine + 2 oxidized [2Fe-2S]-[ferredoxin] + S-adenosyl-L-homocysteine. It catalyses the reaction adenosine(37) in tRNA + 2 reduced [2Fe-2S]-[ferredoxin] + 2 S-adenosyl-L-methionine = 2-methyladenosine(37) in tRNA + 5'-deoxyadenosine + L-methionine + 2 oxidized [2Fe-2S]-[ferredoxin] + S-adenosyl-L-homocysteine. Specifically methylates position 2 of adenine 2503 in 23S rRNA and position 2 of adenine 37 in tRNAs. m2A2503 modification seems to play a crucial role in the proofreading step occurring at the peptidyl transferase center and thus would serve to optimize ribosomal fidelity. The polypeptide is Dual-specificity RNA methyltransferase RlmN (Aliivibrio salmonicida (strain LFI1238) (Vibrio salmonicida (strain LFI1238))).